We begin with the raw amino-acid sequence, 2393 residues long: MDLSSGGPSSSSDVASELDNSDAMQLVRQAVLFENVELLADLFKVNPWVWNRVDRHGRTPLMLAAHNGKLDSLRTILMLSPNSLNLVNDRGKTALHMAAESGETSIVLELVELGSDPMKSDNEGHCALELAQMAGHNEVAAKLIDAIQKESEDLNEAHTMIISACISGSADVVYEISRRFMEKKQSREILFNGRNEEDETALLIACTNGHIEIVRHLLQFEEHLLQSHVSKDTVIHAAVSSQNVEVLQLCLEKFPQLVKSTNNEGSTCLHWAARCGSSECVSTILNFPFPSEFIIEIDTVGAPAYQLALDVNEVDGECRTAMYLAVAEGHLEVVKAMTDFKCTSIDGRQRCPFQLDVYCTRGRTPFMLAAFNQNLPLMTLLLDAGADVNLPLAVLDTEYSVEEGRCIGSGALVEAVRSDGLHIVHFLLDRGALDTDNKALRLAAQGKNEKLIRVFLVRLVFADPEYKINKKNIDVGQIQVGQSLLPSSLCPSKAAQLNWNSANLEQLQSDWFVAAALHVNPRLRTTRLSLAAITRVDLSDNRLNTFPSILFQMPSLRSLNLADNSIRKIEIPTYYISSTSLEILNLRNNQLECIAIQFLSSLPQLQQLDVSKNELSQLPEYIWLCPALKELNASYNRLSTLPMVARASRGERPRLNNSNNNFNTQSPTQESNPIVVDDPPNVTSNPLRRQNVWQASINLSKVDDDSLFPDFPVTSSNTLTTINLSFNKFHTFPFCLACTCPRLLILNMSNNSMTSLPPMACVPAHLRTLDLSYNKIQESFIEASPLHVVCHAVPPTTSNGSMLPKRRNSPARQHRSRSKSAVRSQRSLSVSRHHALIDPQKEEESCVHKRHDSLEWLKTLQLAGNRLRSISVTNAASKVLLPALNVMDISDNKLLQAPPDVARLTLLSMLNLSGNTAIKELPPDYGMLSRLWSLSLKGCSLKEPLESMVNVENCKTVEIVAYLKTILEESKTYHHLRLMILGSDGVGKSVIWDALCKEAVQKRQPIHSETGVIRQAEWKFEAKRSKGDKNLGPVGFSVIDFGGQREYHSTHQYFLSKRSLNLVLWKITDGDEALAQLDTWLVNIHARAPNSTVILVGTNLDQVASNSSKFGPGYIDIMEQKVRTRYMVADADKSGLPRIVDVILINSTSRNDVKALLNTIYRTAWEVRMGKERAMEQQIPSSYIALMKVTKELGVEFRKEGQPAVMTVEAYRERVKKRMISKFGRPFRDDIEFYAACTFLHDCGELVRFEDATLRDLIFVDPLWLAEFLTSVVILRSPNLPAGLLSTDAINPHTRSFKSGALLMLKTQLLDLLHKFELALATQPRQLLIPSLLPDEYRLRSDFLASAVKIRMKMSQWNVRCPSPAGSPTKSPLRRTSPTDQNGVGSEDVMLQFTYDDDQLLRRIYALAYIPSGFWSRLVTRIVGDKNVCAAIESIFMTTSADRAKIADIATKHAKAEWVVWQTGIELHVKGHSLFTLKQFLPLAEVRDIDYSAIDMRAKDEQKRWRTWNQPSHRPIVEMVVNSLSISAASQHGRKLSMKTDVEGRSRLLAMISDLLDTLLEDWYPALGTRFVHSSEGDLLVSRYVLCPQCVRDAERNGSRSRTSSSASHRRSQDDGELPITSSSHMKGSRTTGDISKCRGGVVHCFVIEECMLAGREYNWVECPSHGGLHMRELAPDTVFADIENALTIHPDQLKRSRMLGRGAFGFVFRATVRQPNGELCEVAQKMLEPVDPGPGGRPSALAAYKAAADKWKRDSMEFACRAYCTSRQELSLLSRMKHPNVIGLVGVCTFPLSLVVELAPLGALNQLLGSHRKAGTKLSLGVIKESAVQVARALEYLHSAHIIYRDLKSENVLGWRFPAPFSPQTDVLLKLGDYGISRSVLPSGGAKGFGGTEGFMAPEIVRFNGEEEYTQKVDCFSFGMFLYELLTLKFPFESEEHVKERMLDGARPVLLPHELLLPTPMLDLLVHCWSAHPESRPSSSQLVGFCAAPEFTHLLDVCELGEALPPTQLMAVGITDEIDDPDDFEAQLWLSGREMVVMGCTQYGFVDQKSIELPHRGKYVSKVRDSVWSCDECGQVTVYGISLHETGHLQLPSLNGTLICAPELISNDVLILISDKQIVLLKLSESNSVSHLGTIDSPYEIRTATFLGNGSTRQIWAGHSEGRISIHHIASNDSFSFSSSLYLPDDKCIVRQLVGSKDAQKVWIALEKSSKVQMVEVEKRQVTGSLDIRKVMPGSETIHTIDMEMASQNYVTCIGLLERNDGDQLYIGTSKGLLVIAHATTLQPLSACRPFEGDITSICILEEPSREEENTRGKATTLSTASSESGLGWVRERVSETVDRFRSSPATVETQGAALVVCIGRQFRSLSHRFVAEEKLADVYSIAVWRTEEWAL.

10 ANK repeats span residues 56-86, 90-120, 123-152, 197-226, 230-259, 264-293, 317-347, 361-390, 407-437, and 439-464; these read HGRT…SLNL, RGKT…PMKS, EGHC…KESE, EDET…HLLQ, SKDT…QLVK, EGST…PSEF, ECRT…SIDG, RGRT…DVNL, IGSG…DTDN, and ALRL…FADP. LRR repeat units follow at residues 532-553, 555-576, 580-600, 604-625, and 627-648; these read AITR…LFQM, SLRS…TYYI, SLEI…QFLS, QLQQ…IWLC, and ALKE…ARAS. The tract at residues 649 to 675 is disordered; it reads RGERPRLNNSNNNFNTQSPTQESNPIV. LRR repeat units lie at residues 718–739, 742–763, and 765–787; these read TLTT…LACT, RLLI…ACVP, and HLRT…SPLH. The interval 797 to 844 is disordered; that stretch reads TSNGSMLPKRRNSPARQHRSRSKSAVRSQRSLSVSRHHALIDPQKEEE. Residues 804–820 are compositionally biased toward basic residues; it reads PKRRNSPARQHRSRSKS. Residues 821-830 are compositionally biased toward polar residues; the sequence is AVRSQRSLSV. The span at 835–844 shows a compositional bias: basic and acidic residues; that stretch reads ALIDPQKEEE. 4 LRR repeats span residues 856–877, 883–905, 906–928, and 930–952; these read WLKT…NAAS, ALNV…ARLT, LLSM…YGML, and RLWS…VNVE. In terms of domain architecture, Roc spans 969 to 1167; it reads ESKTYHHLRL…NTIYRTAWEV (199 aa). GTP is bound by residues 982 to 989, 1040 to 1044, and 1098 to 1101; these read GSDGVGKS, DFGGQ, and TNLD. In terms of domain architecture, COR spans 1233–1422; it reads FYAACTFLHD…GFWSRLVTRI (190 aa). 2 disordered regions span residues 1361–1382 and 1596–1633; these read CPSP…TDQN and RNGS…RTTG. Polar residues-rich tracts occupy residues 1366–1382 and 1620–1633; these read GSPT…TDQN and ITSS…RTTG. The Protein kinase domain maps to 1694 to 1992; that stretch reads LKRSRMLGRG…LVGFCAAPEF (299 aa). ATP contacts are provided by residues 1700–1708 and Lys1726; that span reads LGRGAFGFV. Asp1847 serves as the catalytic Proton acceptor.

The protein belongs to the protein kinase superfamily. TKL Ser/Thr protein kinase family. ROCO subfamily. Mg(2+) is required as a cofactor. The cofactor is Mn(2+). As to expression, expressed in cell bodies, but not in dendritic or axonal processes, of adult head neurons. Also present in non-neuronal tissues, such as the body wall musculature and the epithelial cells of the nematode vulva.

The protein resides in the golgi apparatus. The catalysed reaction is L-seryl-[protein] + ATP = O-phospho-L-seryl-[protein] + ADP + H(+). It catalyses the reaction L-threonyl-[protein] + ATP = O-phospho-L-threonyl-[protein] + ADP + H(+). Determines polarized sorting of synaptic vesicle (SV) proteins to the axons by excluding SV proteins from the dendrite-specific transport machinery in the Golgi. Role in stress response. Appears to antagonize the effects of pink-1 both in the regulation of axon guidance and stress response. The protein is Leucine-rich repeat serine/threonine-protein kinase 1 (lrk-1) of Caenorhabditis elegans.